Here is a 710-residue protein sequence, read N- to C-terminus: Ent-copalyl diphosphate synthase 1 (710 aa).

Lys145 is a substrate binding site. Asp277 and Asp279 together coordinate Mg(2+). The short motif at 277-280 (DIDD) is the DXDD motif element. Lys364 contacts substrate.

It belongs to the terpene synthase family. Tpsc subfamily. Mg(2+) serves as cofactor. Expressed in germinating seeds and leaves.

It catalyses the reaction (2E,6E,10E)-geranylgeranyl diphosphate = ent-copalyl diphosphate. It functions in the pathway plant hormone biosynthesis; gibberellin biosynthesis. It participates in secondary metabolite biosynthesis; terpenoid biosynthesis. Its function is as follows. Involved in the biosynthesis of ent-kaurene diterpenoids natural products such as oridonin, miltiradiene, eriocalyxin B and nezukol, known to exhibit antitumor, anti-inflammatory and antibacterial activities, and in the production of gibberellins phytohormones. Catalyzes the conversion of (2E,6E,10E)-geranylgeranyl diphosphate (GGPP) to ent-copalyl diphosphate (ent-CPP). The chain is Ent-copalyl diphosphate synthase 1 from Isodon eriocalyx (Plectranthus eriocalyx).